A 282-amino-acid polypeptide reads, in one-letter code: ATP synthase subunit a (282 aa).

A run of 6 helical transmembrane segments spans residues 38-58 (VDSMFYSVLLGLLTVFLLWLA), 97-117 (FVAPLALTVFVWIFLMNAMDM), 145-165 (VVPTADLSATLGMSCGVLLLC), 187-207 (FGSHPLLYPINFAMQIIEFVA), 225-247 (LIFILIALLGSTATVFGFVGHIV), and 261-281 (TLQAFIFMMLTLVYIGQAHEG).

The protein belongs to the ATPase A chain family. F-type ATPases have 2 components, CF(1) - the catalytic core - and CF(0) - the membrane proton channel. CF(1) has five subunits: alpha(3), beta(3), gamma(1), delta(1), epsilon(1). CF(0) has three main subunits: a(1), b(2) and c(9-12). The alpha and beta chains form an alternating ring which encloses part of the gamma chain. CF(1) is attached to CF(0) by a central stalk formed by the gamma and epsilon chains, while a peripheral stalk is formed by the delta and b chains.

It is found in the cell inner membrane. In terms of biological role, key component of the proton channel; it plays a direct role in the translocation of protons across the membrane. The polypeptide is ATP synthase subunit a (Azoarcus sp. (strain BH72)).